The following is a 415-amino-acid chain: Gamma-glutamyl phosphate reductase (415 aa).

Belongs to the gamma-glutamyl phosphate reductase family.

It localises to the cytoplasm. The catalysed reaction is L-glutamate 5-semialdehyde + phosphate + NADP(+) = L-glutamyl 5-phosphate + NADPH + H(+). Its pathway is amino-acid biosynthesis; L-proline biosynthesis; L-glutamate 5-semialdehyde from L-glutamate: step 2/2. Its function is as follows. Catalyzes the NADPH-dependent reduction of L-glutamate 5-phosphate into L-glutamate 5-semialdehyde and phosphate. The product spontaneously undergoes cyclization to form 1-pyrroline-5-carboxylate. The sequence is that of Gamma-glutamyl phosphate reductase from Mycobacterium sp. (strain JLS).